The sequence spans 562 residues: Protein wntless (562 aa).

Topologically, residues 1 to 15 are cytoplasmic; the sequence is MSGTILENLSGRKLS. Residues 16-36 traverse the membrane as a helical segment; that stretch reads ILVSSLMLCQVVCFLMGGLFA. Over 37-239 the chain is Lumenal; it reads PVPAGHQTVL…AIHQNGGFTQ (203 aa). Residues asparagine 58 and asparagine 103 are each glycosylated (N-linked (GlcNAc...) asparagine). The chain crosses the membrane as a helical span at residues 240–260; the sequence is VWLVLKTLLFPFVIGIMMWFW. Residues 261–275 are Cytoplasmic-facing; it reads RRVHILQRSPALLEY. A helical membrane pass occupies residues 276-296; sequence MLFYLGGALSFLNLPLELLTL. The Lumenal segment spans residues 297-311; the sequence is GVEMPYMLLLSDVRQ. Residues 312-332 traverse the membrane as a helical segment; that stretch reads GIFYAMLLSFWLVFAGEHMLI. Topologically, residues 333–344 are cytoplasmic; that stretch reads QDSPSKSTIRSR. A helical transmembrane segment spans residues 345–365; the sequence is YWKHLSAVVVGCISLFVFDIC. Over 366 to 390 the chain is Lumenal; it reads ERGVQMRNPFYSIWTTPLGAKVAMS. A helical transmembrane segment spans residues 391–411; the sequence is FIVLAGVSAAIYFLFLCFMVW. At 412–441 the chain is on the cytoplasmic side; it reads KVFKDIGDKRTSLPSMSQARRLHYEGLIYR. The chain crosses the membrane as a helical span at residues 442–462; that stretch reads FKFLMLATLLCAGLTVAGFIM. At 463–482 the chain is on the lumenal side; it reads GQMAEGHWKWNENIEIQLTS. A helical transmembrane segment spans residues 483–503; it reads AFLTGVYGMWNIYIFALIILY. The Cytoplasmic portion of the chain corresponds to 504–562; that stretch reads APSHKQWPTMRHSDETTQSNENIVASAASEEIEFSNLPSDSNPSEISSLTSFTRKVAFD.

Belongs to the wntless family. In terms of assembly, interacts with wg; in the Golgi. Interacts with Vps35, a component of the retromer complex; wls stability is regulated by Vps35.

It localises to the presynaptic cell membrane. It is found in the postsynaptic cell membrane. The protein localises to the cell membrane. The protein resides in the endoplasmic reticulum membrane. Its subcellular location is the endosome membrane. It localises to the golgi apparatus membrane. Functionally, a segment polarity gene required for wingless (wg)-dependent patterning processes, acting in both wg-sending cells and wg-target cells. In non-neuronal cells wls directs wg secretion. The wls traffic loop encompasses the Golgi, the cell surface, an endocytic compartment and a retrograde route leading back to the Golgi, and involves clathrin-mediated endocytosis and the retromer complex (a conserved protein complex consisting of Vps35 and Vps26). In neuronal cells (the larval motorneuron NMJ), the wg signal moves across the synapse via the release of wls-containing exosome-like vesicles. Postsynaptic wls is required for the trafficking of fz2 through the fz2-interacting protein Grip. This is Protein wntless from Drosophila grimshawi (Hawaiian fruit fly).